Reading from the N-terminus, the 332-residue chain is Phosphate acyltransferase (332 aa).

It belongs to the PlsX family. As to quaternary structure, homodimer. Probably interacts with PlsY.

The protein resides in the cytoplasm. It catalyses the reaction a fatty acyl-[ACP] + phosphate = an acyl phosphate + holo-[ACP]. The protein operates within lipid metabolism; phospholipid metabolism. Its function is as follows. Catalyzes the reversible formation of acyl-phosphate (acyl-PO(4)) from acyl-[acyl-carrier-protein] (acyl-ACP). This enzyme utilizes acyl-ACP as fatty acyl donor, but not acyl-CoA. The protein is Phosphate acyltransferase of Sulfurimonas denitrificans (strain ATCC 33889 / DSM 1251) (Thiomicrospira denitrificans (strain ATCC 33889 / DSM 1251)).